A 346-amino-acid polypeptide reads, in one-letter code: GTPase Obg (346 aa).

The region spanning 1-158 (MFVDECVVKL…GTYRLVLKSI (158 aa)) is the Obg domain. In terms of domain architecture, OBG-type G spans 159 to 332 (ADVGLVGFPN…LKKELLKRVT (174 aa)). Residues 165–172 (GFPNAGKS), 190–194 (FTTLH), 216–219 (DVPG), 286–289 (NKMD), and 313–315 (SCL) each bind GTP. Residues serine 172 and threonine 192 each contribute to the Mg(2+) site.

It belongs to the TRAFAC class OBG-HflX-like GTPase superfamily. OBG GTPase family. Monomer. The cofactor is Mg(2+).

It localises to the cytoplasm. In terms of biological role, an essential GTPase which binds GTP, GDP and possibly (p)ppGpp with moderate affinity, with high nucleotide exchange rates and a fairly low GTP hydrolysis rate. Plays a role in control of the cell cycle, stress response, ribosome biogenesis and in those bacteria that undergo differentiation, in morphogenesis control. The polypeptide is GTPase Obg (Opitutus terrae (strain DSM 11246 / JCM 15787 / PB90-1)).